We begin with the raw amino-acid sequence, 256 residues long: tRNA (guanine-N(7)-)-methyltransferase (256 aa).

Polar residues predominate over residues 1–15; that stretch reads MVATGGQAQDQSHNQ. Residues 1–22 form a disordered region; the sequence is MVATGGQAQDQSHNQEPGVLCP. S-adenosyl-L-methionine-binding positions include Gly-79, 102–103, 137–138, and Leu-157; these read EI and NA. The active site involves Asp-160. 235–237 provides a ligand contact to S-adenosyl-L-methionine; it reads SEE.

The protein belongs to the class I-like SAM-binding methyltransferase superfamily. TrmB family.

The protein localises to the nucleus. The catalysed reaction is guanosine(46) in tRNA + S-adenosyl-L-methionine = N(7)-methylguanosine(46) in tRNA + S-adenosyl-L-homocysteine. It functions in the pathway tRNA modification; N(7)-methylguanine-tRNA biosynthesis. Catalyzes the formation of N(7)-methylguanine at position 46 (m7G46) in tRNA. This Drosophila yakuba (Fruit fly) protein is tRNA (guanine-N(7)-)-methyltransferase.